The following is a 233-amino-acid chain: 2-C-methyl-D-erythritol 4-phosphate cytidylyltransferase (233 aa).

Belongs to the IspD/TarI cytidylyltransferase family. IspD subfamily.

It catalyses the reaction 2-C-methyl-D-erythritol 4-phosphate + CTP + H(+) = 4-CDP-2-C-methyl-D-erythritol + diphosphate. Its pathway is isoprenoid biosynthesis; isopentenyl diphosphate biosynthesis via DXP pathway; isopentenyl diphosphate from 1-deoxy-D-xylulose 5-phosphate: step 2/6. Catalyzes the formation of 4-diphosphocytidyl-2-C-methyl-D-erythritol from CTP and 2-C-methyl-D-erythritol 4-phosphate (MEP). The polypeptide is 2-C-methyl-D-erythritol 4-phosphate cytidylyltransferase (Gloeobacter violaceus (strain ATCC 29082 / PCC 7421)).